Reading from the N-terminus, the 428-residue chain is Putative F-box protein At3g22421 (428 aa).

The region spanning 4-50 (TTTISHLPTELLDEIISRVPLKSTRAVRLTCKNWDSLFKNRSFMKEE) is the F-box domain.

This chain is Putative F-box protein At3g22421, found in Arabidopsis thaliana (Mouse-ear cress).